The sequence spans 260 residues: Ubiquinone/menaquinone biosynthesis C-methyltransferase UbiE (260 aa).

S-adenosyl-L-methionine contacts are provided by residues Thr83, Asp104, and 132 to 133 (NA).

It belongs to the class I-like SAM-binding methyltransferase superfamily. MenG/UbiE family.

The catalysed reaction is a 2-demethylmenaquinol + S-adenosyl-L-methionine = a menaquinol + S-adenosyl-L-homocysteine + H(+). The enzyme catalyses a 2-methoxy-6-(all-trans-polyprenyl)benzene-1,4-diol + S-adenosyl-L-methionine = a 5-methoxy-2-methyl-3-(all-trans-polyprenyl)benzene-1,4-diol + S-adenosyl-L-homocysteine + H(+). The protein operates within quinol/quinone metabolism; menaquinone biosynthesis; menaquinol from 1,4-dihydroxy-2-naphthoate: step 2/2. Its pathway is cofactor biosynthesis; ubiquinone biosynthesis. Methyltransferase required for the conversion of demethylmenaquinol (DMKH2) to menaquinol (MKH2) and the conversion of 2-polyprenyl-6-methoxy-1,4-benzoquinol (DDMQH2) to 2-polyprenyl-3-methyl-6-methoxy-1,4-benzoquinol (DMQH2). The chain is Ubiquinone/menaquinone biosynthesis C-methyltransferase UbiE from Bartonella quintana (strain Toulouse) (Rochalimaea quintana).